We begin with the raw amino-acid sequence, 245 residues long: 2,3,4,5-tetrahydropyridine-2,6-dicarboxylate N-acetyltransferase (245 aa).

It belongs to the transferase hexapeptide repeat family. DapH subfamily.

It carries out the reaction (S)-2,3,4,5-tetrahydrodipicolinate + acetyl-CoA + H2O = L-2-acetamido-6-oxoheptanedioate + CoA. It functions in the pathway amino-acid biosynthesis; L-lysine biosynthesis via DAP pathway; LL-2,6-diaminopimelate from (S)-tetrahydrodipicolinate (acetylase route): step 1/3. Its function is as follows. Catalyzes the transfer of an acetyl group from acetyl-CoA to tetrahydrodipicolinate. The protein is 2,3,4,5-tetrahydropyridine-2,6-dicarboxylate N-acetyltransferase of Methanopyrus kandleri (strain AV19 / DSM 6324 / JCM 9639 / NBRC 100938).